Here is a 431-residue protein sequence, read N- to C-terminus: Argininosuccinate lyase (431 aa).

It belongs to the lyase 1 family. Argininosuccinate lyase subfamily.

It localises to the cytoplasm. The catalysed reaction is 2-(N(omega)-L-arginino)succinate = fumarate + L-arginine. The protein operates within amino-acid biosynthesis; L-arginine biosynthesis; L-arginine from L-ornithine and carbamoyl phosphate: step 3/3. In Stenotrophomonas maltophilia (strain R551-3), this protein is Argininosuccinate lyase.